A 513-amino-acid chain; its full sequence is CUGBP Elav-like family member 1 (513 aa).

Threonine 31 bears the Phosphothreonine mark. RRM domains are found at residues 43–126 and 135–215; these read IKMF…PADS and RKLF…FADT. Lysine 136 is covalently cross-linked (Glycyl lysine isopeptide (Lys-Gly) (interchain with G-Cter in SUMO2)). Phosphoserine occurs at positions 206 and 329. The disordered stretch occupies residues 304 to 336; it reads TPSGTNALTTSSSPLSVLTSSGSSPSSSSSNSV. Positions 311-336 are enriched in low complexity; sequence LTTSSSPLSVLTSSGSSPSSSSSNSV. Positions 428-506 constitute an RRM 3 domain; the sequence is ANLFIYHLPQ…KRLKVQLKRS (79 aa).

The protein belongs to the CELF/BRUNOL family. As to quaternary structure, associates with polysomes. Interacts with HNRNPH1; the interaction in RNA-dependent. Interacts with PARN. Component of an EIF2 complex at least composed of CELF1/CUGBP1, CALR, CALR3, EIF2S1, EIF2S2, HSP90B1 and HSPA5.

It localises to the nucleus. Its subcellular location is the cytoplasm. In terms of biological role, RNA-binding protein implicated in the regulation of several post-transcriptional events. Involved in pre-mRNA alternative splicing, mRNA translation and stability. Mediates exon inclusion and/or exclusion in pre-mRNA that are subject to tissue-specific and developmentally regulated alternative splicing. Specifically activates exon 5 inclusion of cardiac isoforms of TNNT2 during heart remodeling at the juvenile to adult transition. Acts both as an activator and as a repressor of a pair of coregulated exons: promotes inclusion of the smooth muscle (SM) exon but exclusion of the non-muscle (NM) exon in actinin pre-mRNAs. Activates SM exon 5 inclusion by antagonizing the repressive effect of PTB. Promotes exclusion of exon 11 of the INSR pre-mRNA. Inhibits, together with HNRNPH1, insulin receptor (IR) pre-mRNA exon 11 inclusion in myoblast. Increases translation and controls the choice of translation initiation codon of CEBPB mRNA. Increases mRNA translation of CEBPB in aging liver. Increases translation of CDKN1A mRNA by antagonizing the repressive effect of CALR3. Mediates rapid cytoplasmic mRNA deadenylation. Recruits the deadenylase PARN to the poly(A) tail of EDEN-containing mRNAs to promote their deadenylation. Required for completion of spermatogenesis. Binds to (CUG)n triplet repeats in the 3'-UTR of transcripts such as DMPK and to Bruno response elements (BREs). Binds to muscle-specific splicing enhancer (MSE) intronic sites flanking the alternative exon 5 of TNNT2 pre-mRNA. Binds to AU-rich sequences (AREs or EDEN-like) localized in the 3'-UTR of JUN and FOS mRNAs. Binds to the IR RNA. Binds to the 5'-region of CDKN1A and CEBPB mRNAs. Binds with the 5'-region of CEBPB mRNA in aging liver. May be a specific regulator of miRNA biogenesis. Binds to primary microRNA pri-MIR140 and, with CELF2, negatively regulates the processing to mature miRNA. The sequence is that of CUGBP Elav-like family member 1 (CELF1) from Pongo abelii (Sumatran orangutan).